A 1337-amino-acid polypeptide reads, in one-letter code: Zinc finger protein 335 (1337 aa).

Disordered stretches follow at residues 1–108 (MEEN…LVHS) and 198–226 (GPTSTSACLEPPEEPQGDPSSVAQQPPAP). Composition is skewed to low complexity over residues 31-45 (TSEAVSADSSDAATV) and 54-63 (SGVGQSSDGG). The segment at 248–271 (FKCKMCQYRSSTKATLLRHMRERH) adopts a C2H2-type 1 zinc-finger fold. A disordered region spans residues 278–444 (AAAAATGKRG…PPRRRGRPSR (167 aa)). Acidic residues predominate over residues 302 to 332 (DRPEEEEEDDDIVDAGAIDDLEEDSDYNPAE). Over residues 351–362 (RPRRRPGRPRKL) the composition is skewed to basic residues. Residues 363 to 372 (PRLETSDLHD) show a composition bias toward basic and acidic residues. The segment covering 378-388 (LVSSQSTQSPP) has biased composition (polar residues). 8 consecutive C2H2-type zinc fingers follow at residues 466 to 488 (YLCRICGSRFLSHEDLRFHVNSH), 496 to 518 (FRCLQCSYRSRRWSSLKEHMFNH), 524 to 546 (YKCDECSYTSVYRKDVIRHAAVH), 563 to 585 (FPCPVCGRVYPMQKRLTQHMKTH), 591 to 613 (HMCDKCGKSFKKRYTFKMHLLTH), 622 to 644 (FKCEFCEFVCEDKKALLNHQLSH), 650 to 673 (FKCSFCPYRTFREDFLLSHVAVKH), and 679 to 702 (FACEYCHFSTRHKKNLRLHVRCRH). 2 disordered regions span residues 733–767 (LKQQHSTAPGPPLSSPGPEAPQEPAPFQSPETPPL) and 963–999 (QCGGPPRDGSEVLSPTKTHHMGGSQGSSTPPPAASHT). The span at 741 to 756 (PGPPLSSPGPEAPQEP) shows a compositional bias: pro residues. 2 positions are modified to phosphoserine: Ser976 and Ser1007. C2H2-type zinc fingers lie at residues 1019 to 1041 (FSCKVCSEAFPSRAEMESHKRAH), 1047 to 1069 (FKCPDCPFSARQWPEVRAHMAQH), 1075 to 1097 (HQCNQCSFASKNKKDLRRHMLTH), and 1103 to 1126 (FSCHVCGQRFNRNGHLKFHIQRLH). A Glycyl lysine isopeptide (Lys-Gly) (interchain with G-Cter in SUMO2) cross-link involves residue Lys1022. Phosphoserine is present on Ser1149.

It belongs to the krueppel C2H2-type zinc-finger protein family. As to quaternary structure, interacts with NCOA6; may enhance ligand-dependent transcriptional activation by nuclear hormone receptors. Interacts with CNOT6. Interacts with CNOT9; the interaction is direct. Component of a nuclear receptor-mediated transcription complex composed of at least ZNF335, CCAR2 and EMSY; the complex stimulates the transcription of nuclear receptor target genes such as SOX9 and HOXA1. Within the complex interacts with EMSY and interacts (via C-terminus) with CCAR2. Interacts with members of histone H3'Lys4'(H3K4) methyltransferase complexes ASH2L, CXXC1, KMT2A/MLL1, RBBP5, SETD1A and WDR5. Component of a histone methylation complex composed of at least ZNF335, RBBP5, ASH2L and WDR5; the complex may have histone H3-specific methyltransferase activity, however does not have specificity for 'Lys-4' of histone H3. Interacts with RBBP5 and WDR5. Interacts with ASHL2. Components of this complex may associate with components of the ZNF335-CCAR2-EMSY nuclear receptor-mediated transcription complex to form a complex at least composed of ZNF335, HCFC1, CCAR2, EMSY, MKI67, RBBP5, ASH2L and WDR5. Within this complex also interacts with HCFC1 and MKI67. Expressed at low levels in cerebral cortex, hippocampus and cerebellum (at protein level).

The protein resides in the nucleus. Functionally, component or associated component of some histone methyltransferase complexes may regulate transcription through recruitment of those complexes on gene promoters. Enhances ligand-dependent transcriptional activation by nuclear hormone receptors. Plays an important role in neural progenitor cell proliferation and self-renewal through the regulation of specific genes involved brain development, including REST. Also controls the expression of genes involved in somatic development and regulates, for instance, lymphoblast proliferation. In Mus musculus (Mouse), this protein is Zinc finger protein 335 (Znf335).